The following is a 305-amino-acid chain: Glycine--tRNA ligase alpha subunit (305 aa).

It belongs to the class-II aminoacyl-tRNA synthetase family. In terms of assembly, tetramer of two alpha and two beta subunits.

The protein localises to the cytoplasm. The enzyme catalyses tRNA(Gly) + glycine + ATP = glycyl-tRNA(Gly) + AMP + diphosphate. The sequence is that of Glycine--tRNA ligase alpha subunit from Streptococcus pneumoniae (strain ATCC BAA-255 / R6).